Here is a 285-residue protein sequence, read N- to C-terminus: Complex I assembly factor TIMMDC1, mitochondrial (285 aa).

Transmembrane regions (helical) follow at residues 80-100 (AALS…FIYA), 137-159 (RWSW…LTVY), 165-185 (LSHF…NLGL), and 188-208 (LVAG…LLMA).

Belongs to the Tim17/Tim22/Tim23 family. As to quaternary structure, associates with the intermediate 315 kDa subcomplex of incompletely assembled complex I. Interacts with TMEM70.

It is found in the mitochondrion membrane. Chaperone protein involved in the assembly of the mitochondrial NADH:ubiquinone oxidoreductase complex (complex I). Participates in constructing the membrane arm of complex I. The polypeptide is Complex I assembly factor TIMMDC1, mitochondrial (Rattus norvegicus (Rat)).